A 122-amino-acid polypeptide reads, in one-letter code: UPF0231 protein VSAL_I2591 (122 aa).

The protein belongs to the UPF0231 family.

The chain is UPF0231 protein VSAL_I2591 from Aliivibrio salmonicida (strain LFI1238) (Vibrio salmonicida (strain LFI1238)).